The following is a 437-amino-acid chain: Carbonic anhydrase 9 (437 aa).

The N-terminal stretch at 1 to 31 (MASLGPSPWAPLSTPAPTAQLLLFLLLQVSA) is a signal peptide. The tract at residues 32–95 (QPQGLSGMQG…RMEESLGLED (64 aa)) is proteoglycan-like (PG). The Extracellular segment spans residues 32–390 (QPQGLSGMQG…HVNSCFTAGD (359 aa)). Residues 34 to 118 (QGLSGMQGEP…HGDEKGGGHS (85 aa)) are disordered. Positions 50–79 (SGEDELGVDVLPSEEDAPEEADPPDGEDPP) are enriched in acidic residues. Residues 96–390 (LSTPEAPEHS…HVNSCFTAGD (295 aa)) form a catalytic region. T98 carries O-linked (GlcNAc...) threonine glycosylation. The region spanning 118–369 (SHWSYGGTLL…LNGRTIEASF (252 aa)) is the Alpha-carbonic anhydrase domain. C135 and C315 are oxidised to a cystine. The active-site Proton donor/acceptor is the H179. Zn(2+) is bound by residues H205, H207, and H230. Residue 311 to 312 (TT) coordinates substrate. N-linked (GlcNAc...) asparagine glycosylation is present at N325. Residues 391 to 411 (ILALVFGLLFAVTSIAFLLQL) traverse the membrane as a helical segment. Over 412–437 (RRQHRHRSGTKDRVSYSPAEMTETGA) the chain is Cytoplasmic. The residue at position 427 (Y427) is a Phosphotyrosine.

Belongs to the alpha-carbonic anhydrase family. As to quaternary structure, forms oligomers linked by disulfide bonds. Requires Zn(2+) as cofactor. Post-translationally, asn-325 bears high-mannose type glycan structures.

The protein resides in the nucleus. It localises to the nucleolus. The protein localises to the cell membrane. Its subcellular location is the cell projection. It is found in the microvillus membrane. It catalyses the reaction hydrogencarbonate + H(+) = CO2 + H2O. Its activity is regulated as follows. Inhibited by acetazolamide. In terms of biological role, catalyzes the interconversion between carbon dioxide and water and the dissociated ions of carbonic acid (i.e. bicarbonate and hydrogen ions). The polypeptide is Carbonic anhydrase 9 (Ca9) (Mus musculus (Mouse)).